The following is a 318-amino-acid chain: Myeloid-associated differentiation marker (318 aa).

MARVEL domains lie at 25 to 157 (ALTQ…ARPG) and 162 to 315 (YMAT…RLVF). 8 consecutive transmembrane segments (helical) span residues 35–55 (LLQL…GAWT), 58–78 (MGNW…IILI), 95–115 (FPIT…IIYP), 131–151 (AIAA…EVAW), 165–185 (TVPG…FAFI), 197–217 (LEWC…TVLL), 233–253 (FLSG…VLWP), and 290–310 (LAVS…LVYS).

This sequence belongs to the MAL family.

It localises to the membrane. The polypeptide is Myeloid-associated differentiation marker (Myadm) (Rattus norvegicus (Rat)).